The primary structure comprises 154 residues: 6,7-dimethyl-8-ribityllumazine synthase (154 aa).

Residues 22–23, 56–58, and 80–82 each bind 5-amino-6-(D-ribitylamino)uracil; these read FN, SWE, and VLI. 85-86 contributes to the (2S)-2-hydroxy-3-oxobutyl phosphate binding site; sequence AT. H88 (proton donor) is an active-site residue. Residue F113 participates in 5-amino-6-(D-ribitylamino)uracil binding. R127 provides a ligand contact to (2S)-2-hydroxy-3-oxobutyl phosphate. Residue K135 participates in 5-amino-6-(D-ribitylamino)uracil binding.

This sequence belongs to the DMRL synthase family. In terms of assembly, forms an icosahedral capsid composed of 60 subunits, arranged as a dodecamer of pentamers.

It carries out the reaction (2S)-2-hydroxy-3-oxobutyl phosphate + 5-amino-6-(D-ribitylamino)uracil = 6,7-dimethyl-8-(1-D-ribityl)lumazine + phosphate + 2 H2O + H(+). Its pathway is cofactor biosynthesis; riboflavin biosynthesis; riboflavin from 2-hydroxy-3-oxobutyl phosphate and 5-amino-6-(D-ribitylamino)uracil: step 1/2. Its function is as follows. Catalyzes the formation of 6,7-dimethyl-8-ribityllumazine by condensation of 5-amino-6-(D-ribitylamino)uracil with 3,4-dihydroxy-2-butanone 4-phosphate. This is the penultimate step in the biosynthesis of riboflavin. The polypeptide is 6,7-dimethyl-8-ribityllumazine synthase (ribH) (Aquifex aeolicus (strain VF5)).